Reading from the N-terminus, the 897-residue chain is Translation initiation factor IF-2 (897 aa).

Residues 402–570 (NRAPIVTIMG…SILVQSEILE (169 aa)) enclose the tr-type G domain. Residues 411-418 (GHVDHGKT) are G1. 411–418 (GHVDHGKT) is a GTP binding site. Residues 436-440 (GITQN) form a G2 region. The tract at residues 458-461 (DTPG) is G3. GTP is bound by residues 458–462 (DTPGH) and 512–515 (NKID). Residues 512–515 (NKID) are G4. The interval 548-550 (SAV) is G5.

It belongs to the TRAFAC class translation factor GTPase superfamily. Classic translation factor GTPase family. IF-2 subfamily.

The protein localises to the cytoplasm. In terms of biological role, one of the essential components for the initiation of protein synthesis. Protects formylmethionyl-tRNA from spontaneous hydrolysis and promotes its binding to the 30S ribosomal subunits. Also involved in the hydrolysis of GTP during the formation of the 70S ribosomal complex. The protein is Translation initiation factor IF-2 of Blochmanniella floridana.